Consider the following 93-residue polypeptide: Putative septation protein SpoVG (93 aa).

Belongs to the SpoVG family.

Could be involved in septation. In Fusobacterium nucleatum subsp. nucleatum (strain ATCC 25586 / DSM 15643 / BCRC 10681 / CIP 101130 / JCM 8532 / KCTC 2640 / LMG 13131 / VPI 4355), this protein is Putative septation protein SpoVG.